The primary structure comprises 430 residues: Glutamate-1-semialdehyde 2,1-aminomutase (430 aa).

Position 265 is an N6-(pyridoxal phosphate)lysine (lysine 265).

The protein belongs to the class-III pyridoxal-phosphate-dependent aminotransferase family. HemL subfamily. Homodimer. Pyridoxal 5'-phosphate serves as cofactor.

It is found in the cytoplasm. The catalysed reaction is (S)-4-amino-5-oxopentanoate = 5-aminolevulinate. It participates in porphyrin-containing compound metabolism; protoporphyrin-IX biosynthesis; 5-aminolevulinate from L-glutamyl-tRNA(Glu): step 2/2. This is Glutamate-1-semialdehyde 2,1-aminomutase (hemL) from Helicobacter pylori (strain J99 / ATCC 700824) (Campylobacter pylori J99).